We begin with the raw amino-acid sequence, 859 residues long: Protein SEY1 (859 aa).

At 1-742 (MMMNSHFAGV…KRSAIGGITQ (742 aa)) the chain is on the cytoplasmic side. Positions 49-291 (GFNYHLISVF…FQPQYHRRIP (243 aa)) constitute a GB1/RHD3-type G domain. Residue 59–66 (GSQSTGKS) coordinates GTP. Residues 476–496 (FEHELKVYRKDLDDVSGRLRK) are a coiled coil. The interval 525–544 (LGTGRGGSGAPEHGERPPSE) is disordered. A helical membrane pass occupies residues 743 to 763 (VPLYFYGLLVALGWNEIVAVL). Topologically, residues 764–766 (RNP) are lumenal. A helical transmembrane segment spans residues 767 to 787 (VYFIFLILCAVGAYVTYTLNL). Residues 788-859 (WGPMIRMGNA…DAEVEDLDDI (72 aa)) lie on the Cytoplasmic side of the membrane. The segment at 816-859 (SSESGRQAMAMSGNQPRGESVRMNRLNGNGKKDEDAEVEDLDDI) is disordered. Acidic residues predominate over residues 850-859 (DAEVEDLDDI).

Belongs to the TRAFAC class dynamin-like GTPase superfamily. GB1/RHD3 GTPase family. RHD3 subfamily.

Its subcellular location is the endoplasmic reticulum membrane. In terms of biological role, cooperates with the reticulon proteins and tubule-shaping DP1 family proteins to generate and maintain the structure of the tubular endoplasmic reticulum network. Has GTPase activity, which is required for its function in ER organization. The polypeptide is Protein SEY1 (Phaeosphaeria nodorum (strain SN15 / ATCC MYA-4574 / FGSC 10173) (Glume blotch fungus)).